We begin with the raw amino-acid sequence, 398 residues long: Nicotinate phosphoribosyltransferase (398 aa).

His222 bears the Phosphohistidine; by autocatalysis mark.

Belongs to the NAPRTase family. Post-translationally, transiently phosphorylated on a His residue during the reaction cycle. Phosphorylation strongly increases the affinity for substrates and increases the rate of nicotinate D-ribonucleotide production. Dephosphorylation regenerates the low-affinity form of the enzyme, leading to product release.

It carries out the reaction nicotinate + 5-phospho-alpha-D-ribose 1-diphosphate + ATP + H2O = nicotinate beta-D-ribonucleotide + ADP + phosphate + diphosphate. It participates in cofactor biosynthesis; NAD(+) biosynthesis; nicotinate D-ribonucleotide from nicotinate: step 1/1. Its function is as follows. Catalyzes the synthesis of beta-nicotinate D-ribonucleotide from nicotinate and 5-phospho-D-ribose 1-phosphate at the expense of ATP. This is Nicotinate phosphoribosyltransferase from Acidovorax ebreus (strain TPSY) (Diaphorobacter sp. (strain TPSY)).